Consider the following 294-residue polypeptide: MFKKRGRQTVLIAAVLAFFTASSPLLARTQGEPTQVQQKLAALEKQSGGRLGVALINTADRSQILYRGDERFAMCSTSKTMVAAAVLKQSETQHDILQQKMVIKKADLTNWNPVTEKYVDKEMTLAELSAATLQYSDNTAMNKLLEHLGGTSNVTAFARSIGDTTFRLDRKEPELNTAIPGDERDTTCPLAMAKSLHKLTLGDALAGAQRAQLVEWLKGNTTGGQSIRAGLPEGWVVGDKTGAGDYGTTNDIAVIWPEDRAPLILVTYFTQPQQDAKGRKDILAAAAKIVTEGL.

The signal sequence occupies residues 1-27 (MFKKRGRQTVLIAAVLAFFTASSPLLA). Serine 76 serves as the catalytic Acyl-ester intermediate. Glutamate 174 acts as the Proton acceptor in catalysis. Position 240 to 242 (240 to 242 (KTG)) interacts with substrate.

Belongs to the class-A beta-lactamase family.

The catalysed reaction is a beta-lactam + H2O = a substituted beta-amino acid. The sequence is that of Beta-lactamase from Citrobacter koseri (Citrobacter diversus).